The primary structure comprises 122 residues: Probable DNA-directed RNA polymerase II subunit RPB11 (122 aa).

This sequence belongs to the archaeal Rpo11/eukaryotic RPB11/RPC19 RNA polymerase subunit family. Component of the RNA polymerase II (Pol II) complex consisting of 12 subunits.

Its subcellular location is the nucleus. Functionally, DNA-dependent RNA polymerase catalyzes the transcription of DNA into RNA using the four ribonucleoside triphosphates as substrates. Component of RNA polymerase II which synthesizes mRNA precursors and many functional non-coding RNAs. Pol II is the central component of the basal RNA polymerase II transcription machinery. It is composed of mobile elements that move relative to each other. RPB11 is part of the core element with the central large cleft. In Caenorhabditis briggsae, this protein is Probable DNA-directed RNA polymerase II subunit RPB11 (rpb-11).